The primary structure comprises 315 residues: MSTPGAQQVLFRTGIAAVNLTNHLRVYFQDVYGSIRESLYEGSWANGTEKNVIGNAKLGSPVAATSKELKHIRVYTLTEGNTLQEFAYDSGTGWYNGGLGGAKFQVAPYSRIAAVFLAGTDALQLRIYAQKPDNTIQEYMWNGDGWKEGTNLGGALPGTGIGATSFRYTDYNGPSIRIWFQTDDLKLVQRAYDPHKGWYPDLVTIFDRAPPRTAIAATSFGAGNSSIYMRIYFVNSDNTIWQVCWDHGKGYHDKGTITPVIQGSEVAIISWGSFANNGPDLRLYFQNGTYISAVSEWVWNRAHGSQLGRSALPPA.

A run of 6 repeats spans residues 2–53, 54–103, 104–155, 156–207, 208–260, and 261–315. The interval 2 to 315 is 6 X approximate tandem repeats; that stretch reads STPGAQQVLF…QLGRSALPPA (314 aa). Alpha-L-fucose is bound by residues R25, E37, W44, R73, E85, W94, G98, R126, E138, W146, T150, R177, Q189, W198, R230, and Q242. Residues C244, D246, and H252 each coordinate Zn(2+). Residues R282 and E296 each contribute to the alpha-L-fucose site.

Belongs to the fungal fucose-specific lectin family. As to quaternary structure, homodimer.

Multispecific lectin that is able to recognize L-fucose in all possible linkages. These could be found not only in decomposed plant matter in soil, which is the natural environment for A.fumigatus, but also in various epitopes on human tissues. Mediates binding of A.fumigatus conidia to airway mucin in a fucose dependent manner. Stimulates IL-8 production by human bronchial cells in a dose-dependent manner, contributing to the inflammatory response observed upon the exposure of a patient to A.fumigatus, and thus might be an important virulence factor involved in an early stage of A.fumigatus infection. The chain is Fucose-specific lectin from Aspergillus fumigatus (strain ATCC MYA-4609 / CBS 101355 / FGSC A1100 / Af293) (Neosartorya fumigata).